A 456-amino-acid chain; its full sequence is uncharacterized protein (456 aa).

One can recognise a TRAM domain in the interval 3–61; it reads TIKKNEVKTGKVIDLTHEGHGVVKVDRYPIFIPNALIDEEIKFKLIKVKKNFAIGKLIE. C74, C80, C83, and C162 together coordinate [4Fe-4S] cluster. Positions 286, 315, 336, and 384 each coordinate S-adenosyl-L-methionine. The Nucleophile role is filled by C411.

Belongs to the class I-like SAM-binding methyltransferase superfamily. RNA M5U methyltransferase family.

This is an uncharacterized protein from Staphylococcus epidermidis (strain ATCC 12228 / FDA PCI 1200).